A 453-amino-acid chain; its full sequence is MGRTREAGCVAAGVVIGAGACYCVYRLAWGRDENEKIWDEDEESTDTSEIGVETVKGAKTNAGAGSGAKLQGDSEVKPEVSLGLEDCPGVKEKAHSGSHSGGGLEAKAKALFNTLKEQASAKAGKGARVGTISGNRTLAPSLPCPGGRGGGCHPTRSGSRAGGRASGKSKGKARSKSTRAPATTWPVRRGKFNFPYKIDDILSAPDLQKVLNILERTNDPFIQEVALVTLGNNAAYSFNQNAIRELGGVPIIAKLIKTKDPIIREKTYNALNNLSVNAENQGKIKTYISQVCDDTMVCRLDSAVQMAGLRLLTNMTVTNHYQHLLSYSFPDFFALLFLGNHFTKIQIMKLIINFTENPAMTRELVSCKVPSELISLFNKEWDREILLNILTLFENINDNIKNEGLASSRKEFSRSSLFFLFKESGVCVKKIKALANHNDLVVKVKVLKVLTKL.

The Mitochondrial intermembrane segment spans residues Met-1 to Glu-6. Mitochondrion outer membrane (MOM)-targeting sequence regions lie at residues Met-1–Glu-6 and Arg-26–Lys-36. Residues Ala-7–Trp-29 form a helical; Signal-anchor membrane-spanning segment. Topologically, residues Gly-30 to Leu-453 are cytoplasmic. Disordered regions lie at residues Ala-58 to Lys-77 and Ile-132 to Ala-182. Over residues Gly-167 to Ser-177 the composition is skewed to basic residues. 4 ARM repeats span residues Pro-195–Ala-235, Ser-237–Val-276, Pro-358–Asp-398, and Ser-415–Leu-453.

Belongs to the eutherian X-chromosome-specific Armcx family. As to quaternary structure, interacts with MIRO1. In terms of tissue distribution, expressed at high levels ovary, heart, testis, prostate, brain, spleen and colon. Expressed at very low levels in liver and thymus. Not expressed in peripheral blood leukocytes. Not or reduced expressed in lung, prostate, colon, pancreas and ovarian carcinomas.

It is found in the mitochondrion. The protein localises to the mitochondrion outer membrane. Its function is as follows. Regulates mitochondrial transport during axon regeneration. Increases the proportion of motile mitochondria by recruiting stationary mitochondria into the motile pool. Enhances mitochondria movement and neurite growth in both adult axons and embryonic neurons. Promotes neuronal survival and axon regeneration after nerve injury. May link mitochondria to the Trak1-kinesin motor complex via its interaction with MIRO1. The sequence is that of Armadillo repeat-containing X-linked protein 1 (ARMCX1) from Homo sapiens (Human).